Consider the following 204-residue polypeptide: Guanylate kinase (204 aa).

The Guanylate kinase-like domain occupies G5–D184. G12 to G19 lines the ATP pocket.

It belongs to the guanylate kinase family.

It localises to the cytoplasm. It catalyses the reaction GMP + ATP = GDP + ADP. Functionally, essential for recycling GMP and indirectly, cGMP. In Lactobacillus acidophilus (strain ATCC 700396 / NCK56 / N2 / NCFM), this protein is Guanylate kinase.